A 370-amino-acid polypeptide reads, in one-letter code: Aminomethyltransferase (370 aa).

Belongs to the GcvT family. The glycine cleavage system is composed of four proteins: P, T, L and H.

The catalysed reaction is N(6)-[(R)-S(8)-aminomethyldihydrolipoyl]-L-lysyl-[protein] + (6S)-5,6,7,8-tetrahydrofolate = N(6)-[(R)-dihydrolipoyl]-L-lysyl-[protein] + (6R)-5,10-methylene-5,6,7,8-tetrahydrofolate + NH4(+). In terms of biological role, the glycine cleavage system catalyzes the degradation of glycine. The polypeptide is Aminomethyltransferase (Stenotrophomonas maltophilia (strain R551-3)).